Here is a 547-residue protein sequence, read N- to C-terminus: Chaperonin GroEL (547 aa).

ATP-binding positions include 30–33 (TLGP), Lys-51, 87–91 (DGTTT), Gly-415, 479–481 (NAA), and Asp-495.

This sequence belongs to the chaperonin (HSP60) family. In terms of assembly, forms a cylinder of 14 subunits composed of two heptameric rings stacked back-to-back. Interacts with the co-chaperonin GroES.

Its subcellular location is the cytoplasm. It carries out the reaction ATP + H2O + a folded polypeptide = ADP + phosphate + an unfolded polypeptide.. Its function is as follows. Together with its co-chaperonin GroES, plays an essential role in assisting protein folding. The GroEL-GroES system forms a nano-cage that allows encapsulation of the non-native substrate proteins and provides a physical environment optimized to promote and accelerate protein folding. This is Chaperonin GroEL from Pseudomonas syringae pv. syringae (strain B728a).